The primary structure comprises 552 residues: Dihydroxy-acid dehydratase (552 aa).

Mg(2+) is bound at residue D78. C119 provides a ligand contact to [2Fe-2S] cluster. Residues D120 and K121 each coordinate Mg(2+). The residue at position 121 (K121) is an N6-carboxylysine. C191 provides a ligand contact to [2Fe-2S] cluster. E442 lines the Mg(2+) pocket. S468 functions as the Proton acceptor in the catalytic mechanism.

It belongs to the IlvD/Edd family. Homodimer. Requires [2Fe-2S] cluster as cofactor. Mg(2+) serves as cofactor.

The catalysed reaction is (2R)-2,3-dihydroxy-3-methylbutanoate = 3-methyl-2-oxobutanoate + H2O. It catalyses the reaction (2R,3R)-2,3-dihydroxy-3-methylpentanoate = (S)-3-methyl-2-oxopentanoate + H2O. It participates in amino-acid biosynthesis; L-isoleucine biosynthesis; L-isoleucine from 2-oxobutanoate: step 3/4. Its pathway is amino-acid biosynthesis; L-valine biosynthesis; L-valine from pyruvate: step 3/4. Its function is as follows. Functions in the biosynthesis of branched-chain amino acids. Catalyzes the dehydration of (2R,3R)-2,3-dihydroxy-3-methylpentanoate (2,3-dihydroxy-3-methylvalerate) into 2-oxo-3-methylpentanoate (2-oxo-3-methylvalerate) and of (2R)-2,3-dihydroxy-3-methylbutanoate (2,3-dihydroxyisovalerate) into 2-oxo-3-methylbutanoate (2-oxoisovalerate), the penultimate precursor to L-isoleucine and L-valine, respectively. The sequence is that of Dihydroxy-acid dehydratase from Ruminiclostridium cellulolyticum (strain ATCC 35319 / DSM 5812 / JCM 6584 / H10) (Clostridium cellulolyticum).